Reading from the N-terminus, the 79-residue chain is Serine rich endogenous peptide 2 (79 aa).

The signal sequence occupies residues 1–19 (MANNLGLVILLLVIVLVSC). Residues 25 to 79 (CALASPQKSRPSSEWRRKLIPVRSSRSPRSPSFAPKKPPPPPPSPPLSPSSPPSN) form a disordered region. The SCOOP motif signature appears at 45-57 (PVRSSRSPRSPSF). Residues 45–59 (PVRSSRSPRSPSFAP) show a composition bias toward low complexity. Positions 49 to 51 (SRS) match the SxS motif essential for MIK2 binding motif. Over residues 60–79 (KKPPPPPPSPPLSPSSPPSN) the composition is skewed to pro residues.

Belongs to the serine rich endogenous peptide (SCOOP) phytocytokine family. Interacts with MIK2 (via extracellular leucine-rich repeat domain); this interaction triggers the formation of complex between MIK2 and the BAK1/SERK3 and SERK4 coreceptors, and subsequent BAK1 activation by phosphorylation.

The protein localises to the cell membrane. Its subcellular location is the secreted. It is found in the extracellular space. The protein resides in the apoplast. Functionally, brassicaceae-specific phytocytokine (plant endogenous peptide released into the apoplast) perceived by MIK2 in a BAK1/SERK3 and SERK4 coreceptors-dependent manner, that modulates various physiological and antimicrobial processes including growth prevention and reactive oxygen species (ROS) response regulation. The chain is Serine rich endogenous peptide 2 from Arabidopsis thaliana (Mouse-ear cress).